A 264-amino-acid polypeptide reads, in one-letter code: 3-methyl-2-oxobutanoate hydroxymethyltransferase (264 aa).

D44 and D83 together coordinate Mg(2+). 3-methyl-2-oxobutanoate-binding positions include D44–S45, D83, and K112. E114 is a binding site for Mg(2+). The Proton acceptor role is filled by E181.

It belongs to the PanB family. In terms of assembly, homodecamer; pentamer of dimers. It depends on Mg(2+) as a cofactor.

It localises to the cytoplasm. The enzyme catalyses 3-methyl-2-oxobutanoate + (6R)-5,10-methylene-5,6,7,8-tetrahydrofolate + H2O = 2-dehydropantoate + (6S)-5,6,7,8-tetrahydrofolate. It functions in the pathway cofactor biosynthesis; coenzyme A biosynthesis. Catalyzes the reversible reaction in which hydroxymethyl group from 5,10-methylenetetrahydrofolate is transferred onto alpha-ketoisovalerate to form ketopantoate. This Pyrobaculum arsenaticum (strain DSM 13514 / JCM 11321 / PZ6) protein is 3-methyl-2-oxobutanoate hydroxymethyltransferase.